The following is a 578-amino-acid chain: Septation ring formation regulator EzrA (578 aa).

Topologically, residues 1–8 (MKNNWIII) are extracellular. Residues 9–27 (LVLVIVIIAAVLYLIGYFM) form a helical membrane-spanning segment. Topologically, residues 28 to 578 (RKKNQEQLDE…NINNPNLTAI (551 aa)) are cytoplasmic. Coiled-coil stretches lie at residues 103-165 (RFMK…DDKA), 256-285 (QNFAEEIQHAKKRVENSMADLEKTEIAAVE), and 394-490 (KILD…DDLE).

It belongs to the EzrA family.

The protein resides in the cell membrane. Its function is as follows. Negative regulator of FtsZ ring formation; modulates the frequency and position of FtsZ ring formation. Inhibits FtsZ ring formation at polar sites. Interacts either with FtsZ or with one of its binding partners to promote depolymerization. This Enterococcus faecalis (strain ATCC 700802 / V583) protein is Septation ring formation regulator EzrA.